A 1370-amino-acid chain; its full sequence is Histidine kinase P4 (1370 aa).

Residues 1-20 (MRNIGVFSVILFSFLAISLK) form the signal peptide. A helical transmembrane segment spans residues 799-819 (WAFCLYALCIGTALIALISFL). Residues 852–1072 (NISHEFRTPL…IFRVSLPLGR (221 aa)) form the Histidine kinase domain. The residue at position 855 (His855) is a Phosphohistidine; by autocatalysis. The Response regulatory domain maps to 1119-1234 (TILIVEDHKP…EFRLRIKNIL (116 aa)). At Asp1167 the chain carries 4-aspartylphosphate. The HTH araC/xylS-type domain occupies 1266-1365 (KKAFKIVEDN…NETPSQYQNR (100 aa)). 2 consecutive DNA-binding regions (H-T-H motif) follow at residues 1284–1305 (LAFSQELGVSRTTLFNKIKAWT) and 1332–1355 (ISQISYQVGFKSPKYFSKCFQKKF).

In terms of processing, autophosphorylated. Activation requires a sequential transfer of a phosphate group from a His in the primary transmitter domain, to an Asp in the receiver domain and to a His in the secondary transmitter domain.

It is found in the membrane. It localises to the cell surface. It catalyses the reaction ATP + protein L-histidine = ADP + protein N-phospho-L-histidine.. Functionally, histidine kinase probably involved in ulvan degradation. Ulvan is the main polysaccharide component of the Ulvales (green seaweed) cell wall. It is composed of disaccharide building blocks comprising 3-sulfated rhamnose (Rha3S) linked to D-glucuronic acid (GlcA), L-iduronic acid (IduA), or D-xylose (Xyl). This is Histidine kinase P4 from Formosa agariphila (strain DSM 15362 / KCTC 12365 / LMG 23005 / KMM 3901 / M-2Alg 35-1).